We begin with the raw amino-acid sequence, 288 residues long: Proteasome subunit beta (288 aa).

Positions 1 to 57 (MTAGDPMRLHPGHALSSFTEHLRALAPELLGPNRFAALDGATGSSGGTGAKDIAPHG) are cleaved as a propeptide — removed in mature form; by autocatalysis. Thr58 functions as the Nucleophile in the catalytic mechanism.

It belongs to the peptidase T1B family. In terms of assembly, the 20S proteasome core is composed of 14 alpha and 14 beta subunits that assemble into four stacked heptameric rings, resulting in a barrel-shaped structure. The two inner rings, each composed of seven catalytic beta subunits, are sandwiched by two outer rings, each composed of seven alpha subunits. The catalytic chamber with the active sites is on the inside of the barrel. Has a gated structure, the ends of the cylinder being occluded by the N-termini of the alpha-subunits. Is capped by the proteasome-associated ATPase, ARC.

The protein resides in the cytoplasm. It catalyses the reaction Cleavage of peptide bonds with very broad specificity.. It participates in protein degradation; proteasomal Pup-dependent pathway. With respect to regulation, the formation of the proteasomal ATPase ARC-20S proteasome complex, likely via the docking of the C-termini of ARC into the intersubunit pockets in the alpha-rings, may trigger opening of the gate for substrate entry. Interconversion between the open-gate and close-gate conformations leads to a dynamic regulation of the 20S proteasome proteolysis activity. Its function is as follows. Component of the proteasome core, a large protease complex with broad specificity involved in protein degradation. This Nocardia farcinica (strain IFM 10152) protein is Proteasome subunit beta.